Here is a 73-residue protein sequence, read N- to C-terminus: MPPSFFKKRLSPIKPGDPIDYKDTDLLKKFITERGKLLPRRMTGLTARQQRDLTNSVKRARIVALLPFVNPEG.

It belongs to the bacterial ribosomal protein bS18 family. Part of the 30S ribosomal subunit. Forms a tight heterodimer with protein bS6.

Its function is as follows. Binds as a heterodimer with protein bS6 to the central domain of the 16S rRNA, where it helps stabilize the platform of the 30S subunit. This is Small ribosomal subunit protein bS18 from Synechococcus sp. (strain RCC307).